We begin with the raw amino-acid sequence, 321 residues long: Transaldolase (321 aa).

K132 (schiff-base intermediate with substrate) is an active-site residue.

Belongs to the transaldolase family. Type 1 subfamily. In terms of assembly, homodimer.

Its subcellular location is the cytoplasm. The enzyme catalyses D-sedoheptulose 7-phosphate + D-glyceraldehyde 3-phosphate = D-erythrose 4-phosphate + beta-D-fructose 6-phosphate. Its pathway is carbohydrate degradation; pentose phosphate pathway; D-glyceraldehyde 3-phosphate and beta-D-fructose 6-phosphate from D-ribose 5-phosphate and D-xylulose 5-phosphate (non-oxidative stage): step 2/3. Transaldolase is important for the balance of metabolites in the pentose-phosphate pathway. The protein is Transaldolase of Marinobacter nauticus (strain ATCC 700491 / DSM 11845 / VT8) (Marinobacter aquaeolei).